The following is a 345-amino-acid chain: Small ribosomal subunit protein mS45 (345 aa).

The transit peptide at 1–27 directs the protein to the mitochondrion; that stretch reads MSYGLTGTSSKLRGTSSIFSWTQVRHF.

Belongs to the mitochondrion-specific ribosomal protein mS45 family. In terms of assembly, component of the mitochondrial small ribosomal subunit (mt-SSU). Mature yeast 74S mitochondrial ribosomes consist of a small (37S) and a large (54S) subunit. The 37S small subunit contains a 15S ribosomal RNA (15S mt-rRNA) and 34 different proteins. The 54S large subunit contains a 21S rRNA (21S mt-rRNA) and 46 different proteins.

The protein resides in the mitochondrion. In terms of biological role, component of the mitochondrial ribosome (mitoribosome), a dedicated translation machinery responsible for the synthesis of mitochondrial genome-encoded proteins, including at least some of the essential transmembrane subunits of the mitochondrial respiratory chain. The mitoribosomes are attached to the mitochondrial inner membrane and translation products are cotranslationally integrated into the membrane. This chain is Small ribosomal subunit protein mS45 (MRPS35), found in Saccharomyces cerevisiae (strain ATCC 204508 / S288c) (Baker's yeast).